A 415-amino-acid polypeptide reads, in one-letter code: Squalene synthase clz20 (415 aa).

A glycan (N-linked (GlcNAc...) asparagine) is linked at Asn-114. A helical transmembrane segment spans residues 395 to 415; the sequence is ADTMYLAVLVLGVFGVVAAIL.

This sequence belongs to the phytoene/squalene synthase family. Mg(2+) is required as a cofactor.

Its subcellular location is the membrane. The enzyme catalyses 2 (2E,6E)-farnesyl diphosphate + NADH + H(+) = squalene + 2 diphosphate + NAD(+). It carries out the reaction 2 (2E,6E)-farnesyl diphosphate + NADPH + H(+) = squalene + 2 diphosphate + NADP(+). Its pathway is terpene metabolism; lanosterol biosynthesis; lanosterol from farnesyl diphosphate: step 1/3. Squalene synthase; part of the gene cluster that mediates the biosynthesis of squalestatin S1 (SQS1, also known as zaragozic acid A), a heavily oxidized fungal polyketide that offers potent cholesterol lowering activity by targeting squalene synthase (SS). Catalyzes the condensation of 2 two farnesyl pyrophosphate moieties to form squalene. The presence of a gene encoding a squalene synthase supports the identification of the cluster as being responsible for SQS1 production and suggests a likely mechanism for self-resistance. This is Squalene synthase clz20 from Cochliobolus lunatus (Filamentous fungus).